The primary structure comprises 564 residues: 2-succinyl-5-enolpyruvyl-6-hydroxy-3-cyclohexene-1-carboxylate synthase (564 aa).

This sequence belongs to the TPP enzyme family. MenD subfamily. Homodimer. Mg(2+) serves as cofactor. Mn(2+) is required as a cofactor. The cofactor is thiamine diphosphate.

The enzyme catalyses isochorismate + 2-oxoglutarate + H(+) = 5-enolpyruvoyl-6-hydroxy-2-succinyl-cyclohex-3-ene-1-carboxylate + CO2. Its pathway is quinol/quinone metabolism; 1,4-dihydroxy-2-naphthoate biosynthesis; 1,4-dihydroxy-2-naphthoate from chorismate: step 2/7. It participates in quinol/quinone metabolism; menaquinone biosynthesis. Catalyzes the thiamine diphosphate-dependent decarboxylation of 2-oxoglutarate and the subsequent addition of the resulting succinic semialdehyde-thiamine pyrophosphate anion to isochorismate to yield 2-succinyl-5-enolpyruvyl-6-hydroxy-3-cyclohexene-1-carboxylate (SEPHCHC). The protein is 2-succinyl-5-enolpyruvyl-6-hydroxy-3-cyclohexene-1-carboxylate synthase of Vibrio vulnificus (strain YJ016).